Here is a 70-residue protein sequence, read N- to C-terminus: DNA-directed RNA polymerase subunit omega (70 aa).

The protein belongs to the RNA polymerase subunit omega family. In cyanobacteria the RNAP catalytic core is composed of 2 alpha, 1 beta, 1 beta', 1 gamma and 1 omega subunit. When a sigma factor is associated with the core the holoenzyme is formed, which can initiate transcription.

It carries out the reaction RNA(n) + a ribonucleoside 5'-triphosphate = RNA(n+1) + diphosphate. Its function is as follows. Promotes RNA polymerase assembly. Latches the N- and C-terminal regions of the beta' subunit thereby facilitating its interaction with the beta and alpha subunits. The chain is DNA-directed RNA polymerase subunit omega from Prochlorococcus marinus (strain NATL1A).